Consider the following 882-residue polypeptide: Valine--tRNA ligase (882 aa).

Positions 45–55 (PNVTGSLHIGH) match the 'HIGH' region motif. The short motif at 525–529 (KFSKS) is the 'KMSKS' region element. Residue Lys528 coordinates ATP. Residues 812–881 (EGLIDVAKEK…VLKKGIQNLA (70 aa)) adopt a coiled-coil conformation.

It belongs to the class-I aminoacyl-tRNA synthetase family. ValS type 1 subfamily. Monomer.

The protein resides in the cytoplasm. It carries out the reaction tRNA(Val) + L-valine + ATP = L-valyl-tRNA(Val) + AMP + diphosphate. In terms of biological role, catalyzes the attachment of valine to tRNA(Val). As ValRS can inadvertently accommodate and process structurally similar amino acids such as threonine, to avoid such errors, it has a 'posttransfer' editing activity that hydrolyzes mischarged Thr-tRNA(Val) in a tRNA-dependent manner. The protein is Valine--tRNA ligase of Leptospira interrogans serogroup Icterohaemorrhagiae serovar copenhageni (strain Fiocruz L1-130).